A 210-amino-acid chain; its full sequence is Phosphoenolpyruvate guanylyltransferase (210 aa).

Residues threonine 130, glycine 146, and serine 149 each contribute to the phosphoenolpyruvate site.

Belongs to the CofC family.

The enzyme catalyses phosphoenolpyruvate + GTP + H(+) = enolpyruvoyl-2-diphospho-5'-guanosine + diphosphate. Its pathway is cofactor biosynthesis; coenzyme F420 biosynthesis. In terms of biological role, guanylyltransferase that catalyzes the activation of phosphoenolpyruvate (PEP) as enolpyruvoyl-2-diphospho-5'-guanosine, via the condensation of PEP with GTP. It is involved in the biosynthesis of coenzyme F420, a hydride carrier cofactor. This chain is Phosphoenolpyruvate guanylyltransferase, found in Roseiflexus castenholzii (strain DSM 13941 / HLO8).